Consider the following 174-residue polypeptide: Probable NAD(P)H dehydrogenase subunit CRR3, chloroplastic (174 aa).

The N-terminal 54 residues, 1–54 (MAVLSTIYSITRASTPTMASLTNDSPSPLPSSSPSKLPSPTSPSKKPLKLRQVS), are a transit peptide targeting the chloroplast. Over residues 14–24 (STPTMASLTND) the composition is skewed to polar residues. The interval 14-71 (STPTMASLTNDSPSPLPSSSPSKLPSPTSPSKKPLKLRQVSKQMGSQNQQRRGNKPSI) is disordered. Residues 30–45 (PSSSPSKLPSPTSPSK) are compositionally biased toward low complexity. A compositionally biased stretch (polar residues) spans 53 to 64 (VSKQMGSQNQQR). Residues 140-160 (FTIQWILPIWIMSLLVACGVI) form a helical membrane-spanning segment.

It is found in the plastid. The protein resides in the chloroplast thylakoid membrane. Its function is as follows. Probable subunit of the chloroplast NAD(P)H dehydrogenase (NDH) complex of the photosynthetic electron transport chain. Required for both formation and activity of NDH. May function in assembly or stabilization of the NDH complex. In Arabidopsis thaliana (Mouse-ear cress), this protein is Probable NAD(P)H dehydrogenase subunit CRR3, chloroplastic.